A 387-amino-acid chain; its full sequence is Pyrophosphate--fructose 6-phosphate 1-phosphotransferase 3 (387 aa).

Residue glycine 15 participates in diphosphate binding. Aspartate 114 serves as a coordination point for Mg(2+). Substrate is bound by residues 140-142, 186-188, glutamate 247, and 308-311; these read TID, MGR, and YELR. Catalysis depends on aspartate 142, which acts as the Proton acceptor.

It belongs to the phosphofructokinase type A (PFKA) family. PPi-dependent PFK group II subfamily. Clade 'Short' sub-subfamily. As to quaternary structure, homotetramer. Requires Mg(2+) as cofactor.

The protein resides in the cytoplasm. It carries out the reaction beta-D-fructose 6-phosphate + diphosphate = beta-D-fructose 1,6-bisphosphate + phosphate + H(+). Its pathway is carbohydrate degradation; glycolysis; D-glyceraldehyde 3-phosphate and glycerone phosphate from D-glucose: step 3/4. Non-allosteric. Functionally, catalyzes the phosphorylation of D-fructose 6-phosphate, the first committing step of glycolysis. Uses inorganic phosphate (PPi) as phosphoryl donor instead of ATP like common ATP-dependent phosphofructokinases (ATP-PFKs), which renders the reaction reversible, and can thus function both in glycolysis and gluconeogenesis. Consistently, PPi-PFK can replace the enzymes of both the forward (ATP-PFK) and reverse (fructose-bisphosphatase (FBPase)) reactions. This Trichomonas vaginalis (strain ATCC PRA-98 / G3) protein is Pyrophosphate--fructose 6-phosphate 1-phosphotransferase 3 (pfk3).